We begin with the raw amino-acid sequence, 400 residues long: Serpin E3 (400 aa).

Residues 1-19 (MQSLLLALLLLPVCSPGGA) form the signal peptide. N-linked (GlcNAc...) asparagine glycosylation occurs at Asn-46.

Belongs to the serpin family.

It localises to the secreted. Probable serine protease inhibitor. In Bos taurus (Bovine), this protein is Serpin E3 (SERPINE3).